The primary structure comprises 460 residues: MSESVAIIGAGLVGCLAALAFSKEGYNVTLYDFRQDPRLDTTKNKNLKSINLAISARGIDALKSIDPDACEHILQDMIPMKGRMIHDLKGRQESQLYGLHGEAINSINRSVLNNSLLDELEKSTTELKFGHKLVKIEWTDDKQICHFAIGEDLKTPHTEKYDFVIGCDGAYSATRSQMQRKVEMDFSQEYMNLRYIELYIPPTEEFKPNYGGNFAIAPDHLHIWPRHKFMLIALANSDGSFTSTFFGSKDQISDLITSKSRVREFLIENFPDIINIMDLDDAVKRFITYPKESLVCVNCKPYDVPGGKAILLGDAAHAMVPFYGQGMNCGFEDVRILMALLKKHSGDRSRAFTEYTQTRHKDLVSITELAKRNYKEMSHDVTSKRFLLRKKLDALFSIIMKDKWIPLYTMISFRSDISYSRALERAGKQTRILKFLESLTLGMLSIGGYKLFKFLTRERS.

Residues valine 13, 32–34, and alanine 53 contribute to the FAD site; that span reads DFR. L-kynurenine-binding residues include arginine 83 and tyrosine 97. Residues arginine 109, leucine 133, tyrosine 195, aspartate 314, and 325-328 contribute to the FAD site; that span reads QGMN. L-kynurenine contacts are provided by asparagine 373 and tyrosine 408.

This sequence belongs to the aromatic-ring hydroxylase family. KMO subfamily. FAD serves as cofactor.

The protein resides in the mitochondrion outer membrane. The enzyme catalyses L-kynurenine + NADPH + O2 + H(+) = 3-hydroxy-L-kynurenine + NADP(+) + H2O. The protein operates within cofactor biosynthesis; NAD(+) biosynthesis; quinolinate from L-kynurenine: step 1/3. Catalyzes the hydroxylation of L-kynurenine (L-Kyn) to form 3-hydroxy-L-kynurenine (L-3OHKyn). Required for synthesis of quinolinic acid. This chain is Kynurenine 3-monooxygenase, found in Saccharomyces cerevisiae (strain ATCC 204508 / S288c) (Baker's yeast).